The following is a 323-amino-acid chain: Aldo-keto reductase family 1 member C4 (323 aa).

NADP(+)-binding positions include 20-24 (GFGTY) and Asp-50. Tyr-55 (proton donor) is an active-site residue. Substrate is bound at residue His-117. Residues 166 to 167 (SN), Gln-190, 216 to 221 (HSALGT), and 270 to 280 (KSYNEQRIREN) each bind NADP(+).

This sequence belongs to the aldo/keto reductase family. In terms of assembly, monomer. The N-terminus is blocked. In terms of tissue distribution, liver specific.

It is found in the cytoplasm. Its subcellular location is the cytosol. It catalyses the reaction a 3alpha-hydroxysteroid + NADP(+) = a 3-oxosteroid + NADPH + H(+). The catalysed reaction is a 3alpha-hydroxysteroid + NAD(+) = a 3-oxosteroid + NADH + H(+). It carries out the reaction 5alpha-androstane-3alpha,17beta-diol + NADP(+) = 17beta-hydroxy-5alpha-androstan-3-one + NADPH + H(+). The enzyme catalyses 5alpha-androstane-3beta,17beta-diol + NADP(+) = 17beta-hydroxy-5alpha-androstan-3-one + NADPH + H(+). It catalyses the reaction 5alpha-androstane-3alpha,17beta-diol + NAD(+) = 17beta-hydroxy-5alpha-androstan-3-one + NADH + H(+). The catalysed reaction is 17beta-estradiol + NADP(+) = estrone + NADPH + H(+). It carries out the reaction 17beta-estradiol + NAD(+) = estrone + NADH + H(+). The enzyme catalyses (20S)-hydroxypregn-4-en-3-one + NADP(+) = progesterone + NADPH + H(+). It catalyses the reaction (20S)-hydroxypregn-4-en-3-one + NAD(+) = progesterone + NADH + H(+). The catalysed reaction is androsterone + NADP(+) = 5alpha-androstan-3,17-dione + NADPH + H(+). It carries out the reaction testosterone + NADP(+) = androst-4-ene-3,17-dione + NADPH + H(+). The enzyme catalyses testosterone + NAD(+) = androst-4-ene-3,17-dione + NADH + H(+). It catalyses the reaction 3alpha-hydroxy-5alpha-androstane 17-O-(beta-D-glucuronate) + NADP(+) = 5alpha-dihydrotestosterone 17-O-(beta-D-glucuronate) + NADPH + H(+). The catalysed reaction is (3beta,5alpha,17beta)-3-hydroxy-androstan-17-yl sulfate + NADP(+) = 5alpha-dihydrotestosterone sulfate + NADPH + H(+). It carries out the reaction 5alpha-androstane-3alpha,17beta-diol + NAD(+) = androsterone + NADH + H(+). The enzyme catalyses chlordecone alcohol + NADP(+) = chlordecone + NADPH + H(+). Its pathway is steroid metabolism. With respect to regulation, inhibited by nonsteroidal the anti-inflammatory drugs (NSAID) flufenamic. The oxidation reaction is inhibited by low micromolar concentrations of NADPH. Cytosolic aldo-keto reductase that catalyzes the NADH and NADPH-dependent reduction of ketosteroids to hydroxysteroids. Liver specific enzyme that acts as an NAD(P)(H)-dependent 3-, 17- and 20-ketosteroid reductase on the steroid nucleus and side chain. Displays the ability to catalyze both oxidation and reduction in vitro, but most probably acts as a reductase in vivo since the oxidase activity measured in vitro is inhibited by physiological concentration of NADPH. Acts preferentially as a 3-alpha-hydroxysteroid dehydrogenase (HSD) with a subsidiary 3-beta-HSD activity. Catalyzes efficiently the transformation of the potent androgen 5-alpha-dihydrotestosterone (5alpha-DHT or 17beta-hydroxy-5alpha-androstan-3-one) into the less active form, 5-alpha-androstan-3-alpha,17-beta-diol (3-alpha-diol). Catalyzes the reduction of estrone into 17beta-estradiol but with low efficiency. Metabolizes a broad spectrum of natural and synthetic therapeutic steroid and plays an important role in metabolism of androgens, estrogens, progestereone and conjugated steroids. Catalyzes the biotransformation of the pesticide chlordecone (kepone) to its corresponding alcohol leading to increased biliary excretion of the pesticide and concomitant reduction of its neurotoxicity since bile is the major excretory route. The chain is Aldo-keto reductase family 1 member C4 (AKR1C4) from Homo sapiens (Human).